Consider the following 1002-residue polypeptide: SIT4-associating protein SAP155 (1002 aa).

5 disordered regions span residues 51 to 131 (GTSD…APMM), 214 to 273 (QQQL…ANED), 609 to 645 (EQLKTKHSPTRDTDHDLKNNNGKIDNDNNDNDDESDY), 868 to 901 (DNTTVLTPNGDASNNNEILDSDTGSSNGTSGGGQ), and 940 to 1002 (NTEN…YDHE). Position 58 is a phosphoserine (Ser-58). Over residues 62–97 (EYSHGDEVKTARGDQKSRFEKDDQQERYEKEEEERS) the composition is skewed to basic and acidic residues. Over residues 98–114 (MNSSESSTTSFSSGSTS) the composition is skewed to low complexity. A compositionally biased stretch (acidic residues) spans 220–241 (SSQEDVYVESDTEQEEEKEDDN). Position 255 is a phosphoserine (Ser-255). Residues 262–273 (NNNDDDDDANED) show a composition bias toward acidic residues. Residues 609 to 626 (EQLKTKHSPTRDTDHDLK) show a composition bias toward basic and acidic residues. Residues Thr-613 and Thr-618 each carry the phosphothreonine modification. Over residues 635–645 (DNNDNDDESDY) the composition is skewed to acidic residues. Over residues 868–885 (DNTTVLTPNGDASNNNEI) the composition is skewed to polar residues. Residues 956–976 (SNSNINNTNHNSNNSNNNDNN) are compositionally biased toward low complexity. A compositionally biased stretch (acidic residues) spans 991–1002 (EDADNDNDYDHE).

Belongs to the SAPS family. Associates with the SIT4 protein phosphatase catalytic subunit in a cell-cycle-dependent manner. In terms of processing, hyperphosphorylated in the absence of SIT4.

The protein resides in the cytoplasm. In terms of biological role, positive regulator of protein phosphatase SIT4. Involved in directing expression of TOR-repressed genes and in dephosphorylation of NPR1 in response to nutrient starvation. Negatively modulates K(+) efflux of the cell by the Na(+)-K(+)/H(+) antiporter NHA1. This is SIT4-associating protein SAP155 (SAP155) from Saccharomyces cerevisiae (strain ATCC 204508 / S288c) (Baker's yeast).